The chain runs to 194 residues: GTP cyclohydrolase 1 (194 aa).

Cysteine 83, histidine 86, and cysteine 155 together coordinate Zn(2+).

The protein belongs to the GTP cyclohydrolase I family. Toroid-shaped homodecamer, composed of two pentamers of five dimers.

The enzyme catalyses GTP + H2O = 7,8-dihydroneopterin 3'-triphosphate + formate + H(+). It participates in cofactor biosynthesis; 7,8-dihydroneopterin triphosphate biosynthesis; 7,8-dihydroneopterin triphosphate from GTP: step 1/1. In Streptococcus pyogenes serotype M1, this protein is GTP cyclohydrolase 1 (folE).